The chain runs to 303 residues: MITAKAVKELRERTGAGMMDCKKALTETNGDMEKAVEVLREKGLAAAAKKAGRVAAEGIVKTYVSEDMKKGSIVEINCETDFVALNEEFVGFAGRVAELVANSNVNTVEELLAEKLDGDKTVQEVLTELIAKIGENMSVRRFERFSVESGLVQSYIHGGGRIGVMAELACEASSPVLAEVAKDVCMQIAAANPLFLSEADVDQESLEKEKEIYRAQALNEGKPEHIVDKMVMGRIKKYCKEVCLLDQAWVKDGDKSISKLLEEKSKEVGSPITITKFVRFERGEGIEKKEENFAEEVAKMGGK.

The segment at 80-83 is involved in Mg(2+) ion dislocation from EF-Tu; sequence TDFV.

The protein belongs to the EF-Ts family.

Its subcellular location is the cytoplasm. Its function is as follows. Associates with the EF-Tu.GDP complex and induces the exchange of GDP to GTP. It remains bound to the aminoacyl-tRNA.EF-Tu.GTP complex up to the GTP hydrolysis stage on the ribosome. This Clostridium perfringens (strain SM101 / Type A) protein is Elongation factor Ts.